The chain runs to 396 residues: Aldo-keto reductase ausK (396 aa).

D76 is an NADP(+) binding site. Y81 acts as the Proton donor in catalysis. H156 provides a ligand contact to substrate. NADP(+) is bound by residues 186-187, Q212, 241-251, and 317-325; these read CN, DALGSGKFQSR, and RKIQHLHDN.

The protein belongs to the aldo/keto reductase family. Aldo/keto reductase 2 subfamily. In terms of assembly, homodimer.

Its pathway is secondary metabolite biosynthesis; terpenoid biosynthesis. Functionally, aldo-keto reductase; part of the gene cluster that mediates the biosynthesis of calidodehydroaustin, a fungal meroterpenoid. The first step of the pathway is the synthesis of 3,5-dimethylorsellinic acid by the polyketide synthase ausA. 3,5-dimethylorsellinic acid is then prenylated by the polyprenyl transferase ausN. Further epoxidation by the FAD-dependent monooxygenase ausM and cyclization by the probable terpene cyclase ausL lead to the formation of protoaustinoid A. Protoaustinoid A is then oxidized to spiro-lactone preaustinoid A3 by the combined action of the FAD-binding monooxygenases ausB and ausC, and the dioxygenase ausE. Acid-catalyzed keto-rearrangement and ring contraction of the tetraketide portion of preaustinoid A3 by ausJ lead to the formation of preaustinoid A4. The aldo-keto reductase ausK, with the help of ausH, is involved in the next step by transforming preaustinoid A4 into isoaustinone which is in turn hydroxylated by the P450 monooxygenase ausI to form austinolide. The cytochrome P450 monooxygenase ausG modifies austinolide to austinol. Austinol is further acetylated to austin by the O-acetyltransferase ausP, which spontaneously changes to dehydroaustin. The cytochrome P450 monooxygenase ausR then converts dehydroaustin is into 7-dehydrodehydroaustin. The hydroxylation catalyzed by ausR permits the O-acetyltransferase ausQ to add an additional acetyl group to the molecule, leading to the formation of acetoxydehydroaustin. The short chain dehydrogenase ausT catalyzes the reduction of the double bond present between carbon atoms 1 and 2 to convert 7-dehydrodehydroaustin into 1,2-dihydro-7-hydroxydehydroaustin. AusQ catalyzes not only an acetylation reaction but also the addition of the PKS ausV diketide product to 1,2-dihydro-7-hydroxydehydroaustin, forming precalidodehydroaustin. Finally, the iron/alpha-ketoglutarate-dependent dioxygenase converts precalidodehydroaustin into calidodehydroaustin. This chain is Aldo-keto reductase ausK, found in Aspergillus calidoustus.